We begin with the raw amino-acid sequence, 692 residues long: Elongation factor G (692 aa).

The 275-residue stretch at 8 to 282 (KDTRNIGIMA…AVLDYLPSPL (275 aa)) folds into the tr-type G domain. GTP is bound by residues 17 to 24 (AHIDAGKT), 81 to 85 (DTPGH), and 135 to 138 (NKMD).

This sequence belongs to the TRAFAC class translation factor GTPase superfamily. Classic translation factor GTPase family. EF-G/EF-2 subfamily.

Its subcellular location is the cytoplasm. In terms of biological role, catalyzes the GTP-dependent ribosomal translocation step during translation elongation. During this step, the ribosome changes from the pre-translocational (PRE) to the post-translocational (POST) state as the newly formed A-site-bound peptidyl-tRNA and P-site-bound deacylated tRNA move to the P and E sites, respectively. Catalyzes the coordinated movement of the two tRNA molecules, the mRNA and conformational changes in the ribosome. The chain is Elongation factor G from Shouchella clausii (strain KSM-K16) (Alkalihalobacillus clausii).